Consider the following 411-residue polypeptide: Acetyl-coenzyme A carboxylase carboxyl transferase subunit beta, chloroplastic (411 aa).

Positions 32–302 (LWTRCDHCGV…KEQGRIPYGE (271 aa)) constitute a CoA carboxyltransferase N-terminal domain. C36, C39, C55, and C58 together coordinate Zn(2+). Residues 36-58 (CDHCGVILYIKHLKENQRVCFGC) form a C4-type zinc finger.

The protein belongs to the AccD/PCCB family. In terms of assembly, acetyl-CoA carboxylase is a heterohexamer composed of biotin carboxyl carrier protein, biotin carboxylase and 2 subunits each of ACCase subunit alpha and ACCase plastid-coded subunit beta (accD). Zn(2+) serves as cofactor.

Its subcellular location is the plastid. The protein resides in the chloroplast stroma. The catalysed reaction is N(6)-carboxybiotinyl-L-lysyl-[protein] + acetyl-CoA = N(6)-biotinyl-L-lysyl-[protein] + malonyl-CoA. It participates in lipid metabolism; malonyl-CoA biosynthesis; malonyl-CoA from acetyl-CoA: step 1/1. Functionally, component of the acetyl coenzyme A carboxylase (ACC) complex. Biotin carboxylase (BC) catalyzes the carboxylation of biotin on its carrier protein (BCCP) and then the CO(2) group is transferred by the transcarboxylase to acetyl-CoA to form malonyl-CoA. The protein is Acetyl-coenzyme A carboxylase carboxyl transferase subunit beta, chloroplastic of Chlorella vulgaris (Green alga).